The chain runs to 519 residues: Probable cytochrome P450 6g2 (519 aa).

Cysteine 460 serves as a coordination point for heme.

This sequence belongs to the cytochrome P450 family. Heme is required as a cofactor.

The protein resides in the endoplasmic reticulum membrane. It is found in the microsome membrane. Functionally, may be involved in the metabolism of insect hormones and in the breakdown of synthetic insecticides. The polypeptide is Probable cytochrome P450 6g2 (Cyp6g2) (Drosophila melanogaster (Fruit fly)).